The chain runs to 239 residues: Uridylate kinase (239 aa).

Residue 10–13 (KFSG) coordinates ATP. Positions 18 to 23 (GENGFG) are involved in allosteric activation by GTP. Glycine 52 lines the UMP pocket. Glycine 53 and arginine 57 together coordinate ATP. UMP-binding positions include aspartate 73 and 134 to 141 (TGNPYFTT). The ATP site is built by threonine 161, tyrosine 167, and aspartate 170.

Belongs to the UMP kinase family. As to quaternary structure, homohexamer.

Its subcellular location is the cytoplasm. The catalysed reaction is UMP + ATP = UDP + ADP. It functions in the pathway pyrimidine metabolism; CTP biosynthesis via de novo pathway; UDP from UMP (UMPK route): step 1/1. Allosterically activated by GTP. Inhibited by UTP. In terms of biological role, catalyzes the reversible phosphorylation of UMP to UDP. This chain is Uridylate kinase, found in Campylobacter jejuni subsp. jejuni serotype O:2 (strain ATCC 700819 / NCTC 11168).